Consider the following 59-residue polypeptide: Photosystem II reaction center protein K (59 aa).

The propeptide occupies 1–22 (MLNIFSLIGLNSALYSSSCFFA). The helical transmembrane segment at 30–50 (FLSPIVDFMPVIPLLFFLLAF) threads the bilayer.

It belongs to the PsbK family. In terms of assembly, PSII is composed of 1 copy each of membrane proteins PsbA, PsbB, PsbC, PsbD, PsbE, PsbF, PsbH, PsbI, PsbJ, PsbK, PsbL, PsbM, PsbT, PsbX, PsbY, PsbZ, Psb30/Ycf12, at least 3 peripheral proteins of the oxygen-evolving complex and a large number of cofactors. It forms dimeric complexes.

Its subcellular location is the plastid. The protein localises to the chloroplast thylakoid membrane. One of the components of the core complex of photosystem II (PSII). PSII is a light-driven water:plastoquinone oxidoreductase that uses light energy to abstract electrons from H(2)O, generating O(2) and a proton gradient subsequently used for ATP formation. It consists of a core antenna complex that captures photons, and an electron transfer chain that converts photonic excitation into a charge separation. The polypeptide is Photosystem II reaction center protein K (Silene latifolia (White campion)).